The following is a 247-amino-acid chain: Probable transcriptional regulatory protein Syncc9605_2132 (247 aa).

This sequence belongs to the TACO1 family.

The protein localises to the cytoplasm. This Synechococcus sp. (strain CC9605) protein is Probable transcriptional regulatory protein Syncc9605_2132.